A 108-amino-acid chain; its full sequence is Pyrimidine/purine nucleoside phosphorylase (108 aa).

The protein belongs to the nucleoside phosphorylase PpnP family.

It carries out the reaction a purine D-ribonucleoside + phosphate = a purine nucleobase + alpha-D-ribose 1-phosphate. The catalysed reaction is adenosine + phosphate = alpha-D-ribose 1-phosphate + adenine. It catalyses the reaction cytidine + phosphate = cytosine + alpha-D-ribose 1-phosphate. The enzyme catalyses guanosine + phosphate = alpha-D-ribose 1-phosphate + guanine. It carries out the reaction inosine + phosphate = alpha-D-ribose 1-phosphate + hypoxanthine. The catalysed reaction is thymidine + phosphate = 2-deoxy-alpha-D-ribose 1-phosphate + thymine. It catalyses the reaction uridine + phosphate = alpha-D-ribose 1-phosphate + uracil. The enzyme catalyses xanthosine + phosphate = alpha-D-ribose 1-phosphate + xanthine. Its function is as follows. Catalyzes the phosphorolysis of diverse nucleosides, yielding D-ribose 1-phosphate and the respective free bases. Can use uridine, adenosine, guanosine, cytidine, thymidine, inosine and xanthosine as substrates. Also catalyzes the reverse reactions. This Polaromonas sp. (strain JS666 / ATCC BAA-500) protein is Pyrimidine/purine nucleoside phosphorylase.